Reading from the N-terminus, the 515-residue chain is MSTKLILSFSLCLMVLSCSAQAAQLWPWRKGQDSRPHHGHQQFQQQCDIQRLTASEPSRRVRSEAGVTEIWDHNTPEFRCTGFVAVRYVIQPGGLLLPSYSNAPYITFVEQGRGVQGVVIPGCPETFQSDSEYPQSQRGQHSRESESQESSRGDQHQKIFRVREGDVIPSPAGVVQWTHNDGDQDLISVTLLDANSFHNQLDENVRSFFLAGQSQQGREERRSQQQTREEGGDRQSRESDDVEALIGANILSGFQDEILHELFRDVDRETISKLRGENDQRGFIVQAQDLKLRVPEDSEEGYERQRGDRKRDERGSGRSNGLEQAFCNLKFRQNVNRPSHADVFNPRAGRINTVNSNNLPILEFLQLSAQHVVLYKNAIIGPRWNLNAHSALYVTRGEGRVQVVGDEGKSVFDDNVQRGQILVVPQGFAVVVKAGRQGLEWVELKNNDNAITSPIAGRTSVLRAIPVEVLANSYDISTEEAYKLKNGRQEVEVFRPFQSRYEKEEEKERERFSIV.

The first 22 residues, 1–22 (MSTKLILSFSLCLMVLSCSAQA), serve as a signal peptide directing secretion. An igE-binding epitope region spans residues 23 to 96 (AQLWPWRKGQ…RYVIQPGGLL (74 aa)). 2 disulfides stabilise this stretch: C47–C80 and C123–C327. The 221-residue stretch at 52–272 (LTASEPSRRV…FRDVDRETIS (221 aa)) folds into the Cupin type-1 1 domain. The segment at 97-172 (LPSYSNAPYI…REGDVIPSPA (76 aa)) is igE-binding epitope with a very strong IgE-binding activity. 3 disordered regions span residues 123–156 (CPET…GDQH), 210–241 (LAGQ…ESDD), and 295–320 (PEDS…GRSN). 3 stretches are compositionally biased toward basic and acidic residues: residues 141–156 (HSRE…GDQH), 217–239 (GREE…SRES), and 295–316 (PEDS…ERGS). IgE-binding epitope regions lie at residues 173 to 248 (GVVQ…LIGA) and 249 to 320 (NILS…GRSN). The region spanning 333–482 (QNVNRPSHAD…SYDISTEEAY (150 aa)) is the Cupin type-1 2 domain. The segment at 347–387 (RAGRINTVNSNNLPILEFLQLSAQHVVLYKNAIIGPRWNLN) is igE-binding epitope with a strong IgE-binding activity. 3 igE-binding epitope regions span residues 407–457 (EGKS…PIAG), 440–476 (EWVE…SYDI), and 475–511 (DIST…ERER).

The protein belongs to the 11S seed storage protein (globulins) family. In terms of assembly, homohexamer. Post-translationally, proteolytically processed from a single precursor to produce an acidic and a basic chain that are linked by a disulfide bond. In terms of tissue distribution, expressed in seeds (at protein level).

Its function is as follows. Seed storage protein. The chain is 13S globulin seed storage protein from Fagopyrum tataricum (Tartarian buckwheat).